The primary structure comprises 605 residues: Pescadillo homolog (605 aa).

The segment at 51 to 484 (KANKGSTAPT…GEEEESESES (434 aa)) is sufficient for interaction with ERB1. S288 bears the Phosphoserine mark. Positions 294–342 (LKSALNADEANTDETEKEEEQEKKQEKEQEKEQNEETELDTFEDNNKNK) form a coiled coil. Positions 297 to 342 (ALNADEANTDETEKEEEQEKKQEKEQEKEQNEETELDTFEDNNKNK) are disordered. The segment covering 303–312 (ANTDETEKEE) has biased composition (acidic residues). A Phosphothreonine modification is found at T308. Over residues 313–327 (EQEKKQEKEQEKEQN) the composition is skewed to basic and acidic residues. Residues 355–449 (PVASLFSAFV…ELVPANKYLP (95 aa)) enclose the BRCT domain. The segment at 459–605 (PWGDAIGYDP…AKLNKLDSKK (147 aa)) is disordered. The segment covering 473 to 510 (EEGEEEESESESESEDQVEEEDQEVVAGEEDDDDDEEL) has biased composition (acidic residues). Positions 530 to 605 (EADKDVNKSK…AKLNKLDSKK (76 aa)) form a coiled coil. The span at 562 to 571 (KQKKLYKKMK) shows a compositional bias: basic residues. Residues 575–584 (AKKEEQAENL) show a composition bias toward basic and acidic residues. Over residues 585–598 (KKKKKQIAKQKAKL) the composition is skewed to basic residues.

This sequence belongs to the pescadillo family. As to quaternary structure, component of the NOP7 complex, composed of ERB1, NOP7 and YTM1. The complex is held together by ERB1, which interacts with NOP7 via its N-terminal domain and with YTM1 via a high-affinity interaction between the seven-bladed beta-propeller domains of the 2 proteins. The NOP7 complex associates with the 66S pre-ribosome.

Its subcellular location is the nucleus. It is found in the nucleolus. The protein resides in the nucleoplasm. Functionally, component of the NOP7 complex, which is required for maturation of the 25S and 5.8S ribosomal RNAs and formation of the 60S ribosome. The sequence is that of Pescadillo homolog from Saccharomyces cerevisiae (strain YJM789) (Baker's yeast).